Reading from the N-terminus, the 477-residue chain is Oxidative stress-induced growth inhibitor 1 (477 aa).

S12 bears the Phosphoserine mark.

The protein belongs to the OKL38 family. NADPH serves as cofactor. Ubiquitous. Highest expression in the ovary, testis, kidney, skeletal muscle and liver.

The protein resides in the midbody. Functionally, monooxygenase catalytic activity. Involved in regulation of cytokinesis; promotes RHOA activity, probably acting locally at the midbody in late cytokinesis. Monooxygenase activity is involved in stabilizing transient structures between daughter cells, termed intercellular bridges, before abscission. Regulates differentiation and proliferation through the regulation of cell death. This is Oxidative stress-induced growth inhibitor 1 from Homo sapiens (Human).